The following is a 496-amino-acid chain: O-acetyltransferase cpsE (496 aa).

Polar residues predominate over residues 203–217; that stretch reads IGTQGQLPDGVQSSD. The tract at residues 203 to 228 is disordered; it reads IGTQGQLPDGVQSSDDPTDGAGDIFE.

It belongs to the fumigaclavine B O-acetyltransferase family.

The catalysed reaction is campesine A + acetyl-CoA = campesine C + CoA. It functions in the pathway alkaloid biosynthesis. In terms of biological role, O-acetyltransferase; part of the gene cluster that mediates the biosynthesis of campesine G, a dimeric indole piperazine alkaloid that shows good insecticidal activity Galleria mellonella. Within the pathway, cpsE acetylates N13 of campesine A to produce campesine C. CpsE produces an inseparable mixture of two acyl-atropisomers due to the spontaneous rotation of an acyl group at N13 of piperazine ring. The non-canonical non-ribosomal peptide synthetase cpsA catalyzes the first steps of the pathway by producing L-tryptophanal and L-valinal from their respective amino-acids. These products condensate spontaneously to form trypyl-valyl pyrazine also known as didehydrocampesine A. The NmrA-like family domain-containing oxidoreductase cpsB is the next enzyme in cps pathway and reduces the unstable didehydrocampesine A to campesine A. The methyltransferase cpsF and the acetyltransferase cpsE both recognize N13 of piperazine ring to carry out methylation and acetylation of campesine A to produce campesine C and B, respectively. The cytochrome P450 monooxygenase cpsD then acts as a dimerase that catalyzes oxidative heterocoupling between campesine B and C to produce heterodimers with unexpected 6/5/6/6/6/6/5/6 eight-ring scaffold called campesine D. Finally,the cytochrome P450 monooxygenase cpsC is a regioselective dehydrogenase that catalyzes dehydrogenation reaction towards C2-N1 to produce campesine G. The sequence is that of O-acetyltransferase cpsE from Aspergillus campestris (strain IBT 28561).